A 2363-amino-acid polypeptide reads, in one-letter code: Spectrin beta chain, non-erythrocytic 1 (2363 aa).

T2 is modified (N-acetylthreonine). The tract at residues 2–275 (TTTVATDYDN…IITYVVTYYH (274 aa)) is actin-binding. I14 and S36 each carry phosphoserine. Calponin-homology (CH) domains follow at residues 54–158 (AVQK…LRFQ) and 173–278 (KSAK…HYFS). Residue K90 is modified to N6-acetyllysine. S228 carries the phosphoserine modification. Spectrin repeat units lie at residues 303 to 411 (MIEK…LALR), 423 to 525 (LARR…QRLE), 530 to 636 (LQKI…RLEE), 639 to 742 (RLWK…RLEE), 745 to 847 (LLHQ…ALQD), 850 to 952 (ALYK…DALL), 957 to 1060 (IQNY…SLGE), 1063 to 1166 (KLQQ…NLLS), 1170 to 1259 (AYQQ…RHRK), 1276 to 1376 (DLQK…AQRL), 1381 to 1482 (KAEL…HNLL), 1486 to 1590 (EIHQ…RLEE), 1592 to 1696 (HKAQ…KLDE), 1698 to 1801 (HRLF…TQIL), and 1805 to 1907 (YELH…RVRL). S817, S903, S1057, S1076, S1079, and S1237 each carry phosphoserine. S1388, S1447, and S1557 each carry phosphoserine. The interval 1563–2093 (IRQRLADLKQ…LLEVRRQQEE (531 aa)) is interaction with ANK2. A Phosphotyrosine modification is found at Y1805. K1815, K1913, and K1989 each carry N6-acetyllysine. 2 Spectrin repeats span residues 1914 to 2014 (FRFF…EWLR) and 2018 to 2097 (EVHQ…EERK). The interval 2089-2193 (RQQEEEERKR…AATLPARTLE (105 aa)) is disordered. A phosphoserine mark is found at S2102, S2127, and S2137. Over residues 2115–2130 (SQQWDTSKGDQVSQNG) the composition is skewed to polar residues. T2146 carries the phosphothreonine modification. S2147 is subject to Phosphoserine. The interval 2148–2176 (EMVNGAAEQRTSSKESSPVPSPTLDRKAK) is mediates interaction with CAMSAP1. The residue at position 2158 (T2158) is a Phosphothreonine. S2159, S2160, S2163, S2164, and S2168 each carry phosphoserine. T2170 bears the Phosphothreonine mark. S2183 carries the post-translational modification Phosphoserine. Phosphothreonine occurs at positions 2186 and 2194. Positions 2196–2306 (AAQMEGFLNR…WIQAISSAIS (111 aa)) constitute a PH domain. The segment at 2308–2363 (DKHDTSASTQSTPASSRAQTLPTSVVTITSESSPGKREKDKEKDKEKRFSLFGKKK) is disordered. A phosphoserine mark is found at S2313 and S2318. A compositionally biased stretch (low complexity) spans 2313–2327 (SASTQSTPASSRAQT). A Phosphothreonine modification is found at T2319. S2323 carries an O-linked (GlcNAc) serine glycan. Phosphothreonine is present on T2327. Residues 2328-2340 (LPTSVVTITSESS) show a composition bias toward polar residues. S2339 and S2340 each carry phosphoserine. The span at 2341–2356 (PGKREKDKEKDKEKRF) shows a compositional bias: basic and acidic residues.

It belongs to the spectrin family. As to quaternary structure, interacts with ANK2. Interacts with CPNE4 (via VWFA domain). Like erythrocyte spectrin, the spectrin-like proteins are capable to form dimers which can further associate to tetramers. Interacts with CAMSAP1. Can form heterodimers with SPTAN1. As to expression, isoform 2 is present in brain, heart, kidney and liver (at protein level).

Its subcellular location is the cytoplasm. The protein localises to the cytoskeleton. It localises to the endomembrane system. It is found in the myofibril. The protein resides in the sarcomere. Its subcellular location is the m line. The protein localises to the cytosol. It localises to the cell membrane. Fodrin, which seems to be involved in secretion, interacts with calmodulin in a calcium-dependent manner and is thus candidate for the calcium-dependent movement of the cytoskeleton at the membrane. Plays a critical role in central nervous system development and function. The chain is Spectrin beta chain, non-erythrocytic 1 (Sptbn1) from Mus musculus (Mouse).